The chain runs to 230 residues: ATP synthase subunit a (230 aa).

A run of 5 helical transmembrane segments spans residues 17 to 37 (LPIT…FIMA), 78 to 98 (IFPF…IGVI), 107 to 127 (DLSV…WFGI), 165 to 187 (LFGN…GFLV), and 198 to 218 (EAII…AGGI).

The protein belongs to the ATPase A chain family. As to quaternary structure, F-type ATPases have 2 components, CF(1) - the catalytic core - and CF(0) - the membrane proton channel. CF(1) has five subunits: alpha(3), beta(3), gamma(1), delta(1), epsilon(1). CF(0) has three main subunits: a(1), b(2) and c(9-12). The alpha and beta chains form an alternating ring which encloses part of the gamma chain. CF(1) is attached to CF(0) by a central stalk formed by the gamma and epsilon chains, while a peripheral stalk is formed by the delta and b chains.

The protein resides in the cell inner membrane. Key component of the proton channel; it plays a direct role in the translocation of protons across the membrane. The protein is ATP synthase subunit a of Legionella pneumophila (strain Paris).